We begin with the raw amino-acid sequence, 385 residues long: MNIHEYQAKEILSAYGIPVPRGRVALTSDQVERAAKEMGGRCVIKAQIYAGGRGKAGGVKLVHHPEQAQDYGKELFGRRLITPQTGPEGLKVRRILVEEAVEIAREFYLSITLDRSTSRYCLIASAEGGVDIEEVVQKSPDKIHVLTIDPYTGLRPFQARRIALALGLSGTLCEDCVELMLNLYKVVLEKDCSLVEINPLVVTRAGWLMAMDAKINFDDNAIFRHREYPDMMDYSQLDTLEINAGKYDLSYIKLSGNIGCMVNGAGLAMATLDVLKEFGGEPANFLDVGGGATREKVAEAFKIILEDADVKGVFVNIFGGIMRCDVIAQGIIEAASEVHCTLPIVVRMDGSKVAEGKQLLVESGLNVQTADSLGEGAERIVGMLG.

An ATP-grasp domain is found at 9 to 243 (KEILSAYGIP…YSQLDTLEIN (235 aa)). ATP contacts are provided by residues lysine 45, 52–54 (GRG), glutamate 98, valine 101, and glutamate 106. Mg(2+)-binding residues include asparagine 198 and aspartate 212. Residues asparagine 263 and 320 to 322 (GIM) contribute to the substrate site.

Belongs to the succinate/malate CoA ligase beta subunit family. As to quaternary structure, heterotetramer of two alpha and two beta subunits. Mg(2+) is required as a cofactor.

The catalysed reaction is succinate + ATP + CoA = succinyl-CoA + ADP + phosphate. It catalyses the reaction GTP + succinate + CoA = succinyl-CoA + GDP + phosphate. It functions in the pathway carbohydrate metabolism; tricarboxylic acid cycle; succinate from succinyl-CoA (ligase route): step 1/1. In terms of biological role, succinyl-CoA synthetase functions in the citric acid cycle (TCA), coupling the hydrolysis of succinyl-CoA to the synthesis of either ATP or GTP and thus represents the only step of substrate-level phosphorylation in the TCA. The beta subunit provides nucleotide specificity of the enzyme and binds the substrate succinate, while the binding sites for coenzyme A and phosphate are found in the alpha subunit. The polypeptide is Succinate--CoA ligase [ADP-forming] subunit beta (Geobacter sulfurreducens (strain ATCC 51573 / DSM 12127 / PCA)).